The primary structure comprises 72 residues: MSKVCVLTGKRPKYGNTVSHANNHRRTRFEPNLHTKRIWIDEEKRWAKVKLSAKAMKIIAKTGTAELAKLLK.

This sequence belongs to the bacterial ribosomal protein bL28 family.

The chain is Large ribosomal subunit protein bL28 from Chlorobium luteolum (strain DSM 273 / BCRC 81028 / 2530) (Pelodictyon luteolum).